A 1676-amino-acid chain; its full sequence is Anucleate primary sterigmata protein A (1676 aa).

Residues M1–M11 are compositionally biased toward polar residues. The interval M1–Y35 is disordered. Residues A51–F127 are a coiled coil. Disordered regions lie at residues Q160–N180, R353–H394, D439–P712, G1027–P1050, P1176–A1201, V1220–S1270, and P1297–S1354. Positions N163–S172 are enriched in low complexity. Coiled-coil stretches lie at residues T193 to A359 and H408 to G453. Basic and acidic residues-rich tracts occupy residues R355 to D370, D439 to S448, T461 to R470, K479 to D489, and A503 to A522. Residues S593–A602 are compositionally biased toward low complexity. Polar residues predominate over residues D609–T620. A compositionally biased stretch (basic residues) spans Y623–R636. Residues S647 to T664 are compositionally biased toward polar residues. Residues A678–F687 show a composition bias toward acidic residues. The span at T1032 to S1042 shows a compositional bias: low complexity. Residues S1191–A1201 show a composition bias toward polar residues. The span at R1314–A1341 shows a compositional bias: polar residues. A PH domain is found at Q1393–V1504. Acidic residues predominate over residues E1511–E1524. Disordered stretches follow at residues E1511–S1589 and H1654–H1676. 2 stretches are compositionally biased toward polar residues: residues R1534–G1548 and Y1580–S1589.

It localises to the membrane. In terms of biological role, required for nuclear positioning and completion of asexual development. This chain is Anucleate primary sterigmata protein A (apsA), found in Emericella nidulans (strain FGSC A4 / ATCC 38163 / CBS 112.46 / NRRL 194 / M139) (Aspergillus nidulans).